We begin with the raw amino-acid sequence, 247 residues long: Small ribosomal subunit protein uS3 (247 aa).

In terms of domain architecture, KH type-2 spans 18-87; that stretch reads IDEYLAKRFY…NPQITVRRVE (70 aa). The disordered stretch occupies residues 226 to 247; that stretch reads QQGEVVGEAPNTPLEEQGQKQG.

Belongs to the universal ribosomal protein uS3 family. Part of the 30S ribosomal subunit.

Binds the lower part of the 30S subunit head. In Hyperthermus butylicus (strain DSM 5456 / JCM 9403 / PLM1-5), this protein is Small ribosomal subunit protein uS3.